The primary structure comprises 207 residues: Small ribosomal subunit protein uS4 (207 aa).

The segment at 31–53 is disordered; the sequence is KAKFDSKPGQHGRTSGARTSDFG. The S4 RNA-binding domain maps to 97–157; the sequence is SRLDNVVYRM…EKSKKQARIV (61 aa).

Belongs to the universal ribosomal protein uS4 family. As to quaternary structure, part of the 30S ribosomal subunit. Contacts protein S5. The interaction surface between S4 and S5 is involved in control of translational fidelity.

In terms of biological role, one of the primary rRNA binding proteins, it binds directly to 16S rRNA where it nucleates assembly of the body of the 30S subunit. Its function is as follows. With S5 and S12 plays an important role in translational accuracy. The sequence is that of Small ribosomal subunit protein uS4 from Paracidovorax citrulli (strain AAC00-1) (Acidovorax citrulli).